We begin with the raw amino-acid sequence, 315 residues long: Ribosomal RNA large subunit methyltransferase F (315 aa).

Belongs to the methyltransferase superfamily. METTL16/RlmF family.

Its subcellular location is the cytoplasm. The catalysed reaction is adenosine(1618) in 23S rRNA + S-adenosyl-L-methionine = N(6)-methyladenosine(1618) in 23S rRNA + S-adenosyl-L-homocysteine + H(+). Functionally, specifically methylates the adenine in position 1618 of 23S rRNA. This is Ribosomal RNA large subunit methyltransferase F from Aeromonas salmonicida (strain A449).